A 110-amino-acid polypeptide reads, in one-letter code: Phosphoribosyl-ATP pyrophosphatase (110 aa).

The protein belongs to the PRA-PH family.

It is found in the cytoplasm. It carries out the reaction 1-(5-phospho-beta-D-ribosyl)-ATP + H2O = 1-(5-phospho-beta-D-ribosyl)-5'-AMP + diphosphate + H(+). The protein operates within amino-acid biosynthesis; L-histidine biosynthesis; L-histidine from 5-phospho-alpha-D-ribose 1-diphosphate: step 2/9. In Pseudomonas fluorescens (strain Pf0-1), this protein is Phosphoribosyl-ATP pyrophosphatase.